Consider the following 263-residue polypeptide: tRNA pseudouridine synthase A (263 aa).

Residue Asp53 is the Nucleophile of the active site. Tyr111 contributes to the substrate binding site. The disordered stretch occupies residues 232–263; it reads TAPGHGLISGRSNMTNGKLENNKTTNPCVTKY. Over residues 241–263 the composition is skewed to polar residues; the sequence is GRSNMTNGKLENNKTTNPCVTKY.

It belongs to the tRNA pseudouridine synthase TruA family. As to quaternary structure, homodimer.

The catalysed reaction is uridine(38/39/40) in tRNA = pseudouridine(38/39/40) in tRNA. Formation of pseudouridine at positions 38, 39 and 40 in the anticodon stem and loop of transfer RNAs. The sequence is that of tRNA pseudouridine synthase A from Halalkalibacterium halodurans (strain ATCC BAA-125 / DSM 18197 / FERM 7344 / JCM 9153 / C-125) (Bacillus halodurans).